Reading from the N-terminus, the 388-residue chain is Na(+)/H(+) antiporter NhaA (388 aa).

The Cytoplasmic portion of the chain corresponds to Met1–Asp11. Residues Ala12 to Ser31 traverse the membrane as a helical segment. Topologically, residues Gly32–Asn58 are periplasmic. Residues Met59 to Lys80 form a helical membrane-spanning segment. Over Arg81–Phe96 the chain is Cytoplasmic. The chain crosses the membrane as a helical span at residues Pro97–Asn116. The Periplasmic portion of the chain corresponds to Tyr117–Thr122. Residues Arg123 to Ala130 form a helical membrane-spanning segment. Residues Ala131–Ile154 are Cytoplasmic-facing. Residues Phe155 to Thr176 form a helical membrane-spanning segment. The Periplasmic segment spans residues Asn177–Ser180. Residues Met181–Cys200 form a helical membrane-spanning segment. Residues Gly201–Arg204 are Cytoplasmic-facing. A helical transmembrane segment spans residues Thr205–Ser222. Residue Gly223 is a topological domain, periplasmic. Residues Val224–Phe236 form a helical membrane-spanning segment. At Ile237 to His253 the chain is on the cytoplasmic side. Residues Val254–Ala272 traverse the membrane as a helical segment. Topologically, residues Gly273 to Ser286 are periplasmic. A helical transmembrane segment spans residues Ile287–Leu310. Over Ala311–Phe339 the chain is Cytoplasmic. The helical transmembrane segment at Thr340–Phe350 threads the bilayer. The Periplasmic segment spans residues Gly351 to Leu357. A helical transmembrane segment spans residues Ile358–Leu380. The Cytoplasmic portion of the chain corresponds to Arg381–Val388.

It belongs to the NhaA Na(+)/H(+) (TC 2.A.33) antiporter family.

The protein localises to the cell inner membrane. It carries out the reaction Na(+)(in) + 2 H(+)(out) = Na(+)(out) + 2 H(+)(in). Na(+)/H(+) antiporter that extrudes sodium in exchange for external protons. The polypeptide is Na(+)/H(+) antiporter NhaA (Escherichia coli O1:K1 / APEC).